We begin with the raw amino-acid sequence, 141 residues long: Large ribosomal subunit protein uL11 (141 aa).

It belongs to the universal ribosomal protein uL11 family. In terms of assembly, part of the ribosomal stalk of the 50S ribosomal subunit. Interacts with L10 and the large rRNA to form the base of the stalk. L10 forms an elongated spine to which L12 dimers bind in a sequential fashion forming a multimeric L10(L12)X complex. In terms of processing, one or more lysine residues are methylated.

In terms of biological role, forms part of the ribosomal stalk which helps the ribosome interact with GTP-bound translation factors. The chain is Large ribosomal subunit protein uL11 from Maridesulfovibrio salexigens (strain ATCC 14822 / DSM 2638 / NCIMB 8403 / VKM B-1763) (Desulfovibrio salexigens).